Reading from the N-terminus, the 605-residue chain is Probable potassium transport system protein Kup (605 aa).

Transmembrane regions (helical) follow at residues Gly-18–Leu-38, Ile-46–Ala-66, Met-97–Ile-117, Gly-138–Phe-158, Ala-169–Val-189, Ala-204–Leu-224, Ala-247–Ile-267, Phe-287–Ile-307, Ile-339–Phe-359, Ala-368–Phe-388, Trp-395–Cys-415, and Leu-418–Ile-438.

It belongs to the HAK/KUP transporter (TC 2.A.72) family.

The protein resides in the cell inner membrane. It carries out the reaction K(+)(in) + H(+)(in) = K(+)(out) + H(+)(out). In terms of biological role, transport of potassium into the cell. Likely operates as a K(+):H(+) symporter. This chain is Probable potassium transport system protein Kup, found in Pelobacter propionicus (strain DSM 2379 / NBRC 103807 / OttBd1).